The primary structure comprises 327 residues: Flotillin-like protein FloA (327 aa).

Residues 2 to 22 (IGLIIIVVIVLVALLLLFSFV) form a helical membrane-spanning segment. The segment at 305 to 327 (ADTGMRNSINQRTNQKDDESPDK) is disordered. Positions 318–327 (NQKDDESPDK) are enriched in basic and acidic residues.

This sequence belongs to the flotillin-like FloA family. As to quaternary structure, homooligomerizes.

It localises to the cell membrane. Its subcellular location is the membrane raft. Its function is as follows. Found in functional membrane microdomains (FMM) that may be equivalent to eukaryotic membrane rafts. FMMs are highly dynamic and increase in number as cells age. Flotillins are thought to be important factors in membrane fluidity. The protein is Flotillin-like protein FloA of Staphylococcus saprophyticus subsp. saprophyticus (strain ATCC 15305 / DSM 20229 / NCIMB 8711 / NCTC 7292 / S-41).